Here is a 652-residue protein sequence, read N- to C-terminus: MADAAQNQMVEIDPDFEPLSRPRSCTWPLPRPEFPNPAAADSNTSSPAPSVKQEPSSTADFINNLSLLEENEDYPDQKPLMLCSEFQCQENCIHQQQIPSQQQQVPVLSSPVAAAAAAAAAAQRKSSSSRRNAWGNMSYADLITKAIESSPEKRLTLSQIYDWMVKSVPYFKDKGDSNSSAGWKNSIRHNLSLHSRFIRVQNEGTGKSSWWMLNPEGGKSGKSPRRRAASMDNNSKFAKSRGRAAKKKLALQGGPEGGADSPGSQYGKWPGSPNSHSNDDFEAWTAFRPRTSSNASTLSGRLSPFIDDELGDSDVHMVYPGPGSGTKMTSTLPSLSEMAGSLGHSGSENVMENLLDNLNLLSPKNPSTGGPGSGSNQSSPSSLMQASPGYSPYSSPGLSAVSQQTQQDFRKCLYGQAGMGSMSPMPMQPLPESKPSFGPGGGTMGQFNCTAGLLKELLTSDGEPGDLMPSVDTVVSQSAGGSGCMLPPYSSGRNELMGGGPTHSHTLSHPHNMHGQAPPTSVALNGRSLHPLTAIGHSSVGGRLGSGKSPMQMQYGGSGHLGGGLPPYCSMSSNGYGRGPGMMAHQQLQHLEKLPSDLDGMPIERFECDVESILHDTLMDGESLDFNFDPMNSQQGFVPHSVKTTTHSWVSG.

3 disordered regions span residues 1 to 57 (MADA…EPSS), 208 to 277 (SSWW…NSHS), and 359 to 406 (NLLS…QQTQ). Positions 41-57 (DSNTSSPAPSVKQEPSS) are enriched in polar residues. The fork-head DNA-binding region spans 134–228 (WGNMSYADLI…KSGKSPRRRA (95 aa)). Over residues 238–249 (AKSRGRAAKKKL) the composition is skewed to basic residues. Residues 362–397 (SPKNPSTGGPGSGSNQSSPSSLMQASPGYSPYSSPG) show a composition bias toward low complexity.

The protein localises to the cytoplasm. It localises to the nucleus. In terms of biological role, transcription factor that regulates metabolic homeostasis in response to oxidative stress. Binds to the consensus sequence 5'-TT[G/A]TTTTG-3' and the related Daf-16 family binding element (DBE) with consensus sequence 5'-TT[G/A]TTTAC-3'. Main regulator of redox balance and osteoblast numbers and controls bone mass. Orchestrates the endocrine function of the skeleton in regulating glucose metabolism. May be involved in regulating cellular homeostasis in the eye. May act as a positive regulator of apoptosis in cardiac smooth muscle cells as a result of its transcriptional activation of pro-apoptotic genes. The chain is Forkhead box protein O1-A (foxo1a) from Danio rerio (Zebrafish).